The chain runs to 339 residues: Cathepsin B (339 aa).

The signal sequence occupies residues 1-17; that stretch reads MWWSLIPLSCLLALTSA. Positions 18–79 are cleaved as a propeptide — activation peptide; it reads HDKPSSHPLS…ERVGFSEDIN (62 aa). 6 disulfides stabilise this stretch: cysteine 93–cysteine 122, cysteine 105–cysteine 150, cysteine 141–cysteine 207, cysteine 142–cysteine 146, cysteine 179–cysteine 211, and cysteine 187–cysteine 198. Cysteine 108 is a catalytic residue. Asparagine 192 carries N-linked (GlcNAc...) asparagine glycosylation. Residue lysine 220 is modified to N6-acetyllysine. Catalysis depends on residues histidine 278 and asparagine 298. The propeptide occupies 334 to 339; sequence QYWGRF.

It belongs to the peptidase C1 family. As to quaternary structure, dimer of a heavy chain and a light chain cross-linked by a disulfide bond. Interacts with SRPX2. Directly interacts with SHKBP1. In terms of tissue distribution, expressed in the epithelial cells of the prostate and mammary gland.

It is found in the lysosome. The protein localises to the melanosome. Its subcellular location is the secreted. The protein resides in the extracellular space. It localises to the apical cell membrane. The catalysed reaction is Hydrolysis of proteins with broad specificity for peptide bonds. Preferentially cleaves -Arg-Arg-|-Xaa bonds in small molecule substrates (thus differing from cathepsin L). In addition to being an endopeptidase, shows peptidyl-dipeptidase activity, liberating C-terminal dipeptides.. Its function is as follows. Thiol protease which is believed to participate in intracellular degradation and turnover of proteins. Cleaves matrix extracellular phosphoglycoprotein MEPE. Involved in the solubilization of cross-linked TG/thyroglobulin in the thyroid follicle lumen. Has also been implicated in tumor invasion and metastasis. The sequence is that of Cathepsin B (Ctsb) from Rattus norvegicus (Rat).